Here is a 936-residue protein sequence, read N- to C-terminus: Periplasmic nitrate reductase (936 aa).

The tat-type signal signal peptide spans 1 to 31 (MALSRRDFLKSSAAAAAASAVGLSVPKEVEA). In terms of domain architecture, 4Fe-4S Mo/W bis-MGD-type spans 40-96 (WRWDKAVCRFCGTGCGIMIATKDDRIVAVKGDPLAPVNRGLNCIKGYFTAKIMYGAD). The [4Fe-4S] cluster site is built by Cys47, Cys50, Cys54, and Cys82. Residues Lys84, Gln152, Asn177, Cys181, 214–221 (WGSNMAEM), 246–250 (STYTH), Met424, Gln428, Asn534, 559–560 (SD), Lys582, Asp609, and 826–835 (TGRVLEHWHS) contribute to the Mo-bis(molybdopterin guanine dinucleotide) site. Trp902 serves as a coordination point for substrate. The Mo-bis(molybdopterin guanine dinucleotide) site is built by Asn910 and Lys927.

The protein belongs to the prokaryotic molybdopterin-containing oxidoreductase family. NasA/NapA/NarB subfamily. In terms of assembly, component of the periplasmic nitrate reductase NapAB complex composed of NapA and NapB. Requires [4Fe-4S] cluster as cofactor. Mo-bis(molybdopterin guanine dinucleotide) is required as a cofactor. Predicted to be exported by the Tat system. The position of the signal peptide cleavage has not been experimentally proven.

The protein resides in the periplasm. The enzyme catalyses 2 Fe(II)-[cytochrome] + nitrate + 2 H(+) = 2 Fe(III)-[cytochrome] + nitrite + H2O. Functionally, catalytic subunit of the periplasmic nitrate reductase complex NapAB. Receives electrons from NapB and catalyzes the reduction of nitrate to nitrite. In Nitratiruptor sp. (strain SB155-2), this protein is Periplasmic nitrate reductase.